A 365-amino-acid polypeptide reads, in one-letter code: Cobalt-precorrin-5B C(1)-methyltransferase (365 aa).

The protein belongs to the CbiD family.

The enzyme catalyses Co-precorrin-5B + S-adenosyl-L-methionine = Co-precorrin-6A + S-adenosyl-L-homocysteine. It participates in cofactor biosynthesis; adenosylcobalamin biosynthesis; cob(II)yrinate a,c-diamide from sirohydrochlorin (anaerobic route): step 6/10. In terms of biological role, catalyzes the methylation of C-1 in cobalt-precorrin-5B to form cobalt-precorrin-6A. This chain is Cobalt-precorrin-5B C(1)-methyltransferase, found in Pseudomonas fluorescens (strain Pf0-1).